Consider the following 257-residue polypeptide: MGLPGLGLLLKRFGVLVRVALKVAVGKVLLTLWPSAIRPHLLAMSEKTGMAKNPRFTYEDWAPTFFSTQYFWFVLKVNWQQLEDRTKQGDIAPDSPVVHLSGQRARLWDFMQGNRPLVLNFGSCSUPSFLFKFDQFKRLVEDFSSVADFLTVYIEEAHASDGWAFKNNVDIRRHRDLQERLQAARLLLDRNPGCPVVVDTMENRSSQLYAALPERLYVLQEGRILYKGGPGPWNYHPEEVHAVLEQLCRSSAQSPRL.

Over 1-12 the chain is Extracellular; it reads MGLPGLGLLLKR. A helical; Signal-anchor for type III membrane protein membrane pass occupies residues 13-33; it reads FGVLVRVALKVAVGKVLLTLW. Over 34 to 257 the chain is Cytoplasmic; it reads PSAIRPHLLA…CRSSAQSPRL (224 aa). Selenocysteine 126 is a catalytic residue. Position 126 (selenocysteine 126) is a non-standard amino acid, selenocysteine.

The protein belongs to the iodothyronine deiodinase family. As to quaternary structure, predominantly monomer. Can form homodimers but homodimerization is not essential for enzyme activity. As to expression, liver specific.

The protein localises to the cell membrane. The protein resides in the endoplasmic reticulum membrane. It is found in the basolateral cell membrane. The enzyme catalyses 3,3',5-triiodo-L-thyronine + iodide + A + H(+) = L-thyroxine + AH2. It carries out the reaction 3,3',5'-triiodo-L-thyronine + iodide + A + H(+) = L-thyroxine + AH2. The catalysed reaction is 3,3'-diiodo-L-thyronine + iodide + A + H(+) = 3,3',5'-triiodo-L-thyronine + AH2. It catalyses the reaction 3,3'-diiodo-L-thyronine + iodide + A + H(+) = 3,3',5-triiodo-L-thyronine + AH2. The enzyme catalyses 3'-iodo-L-thyronine + iodide + A + H(+) = 3',5'-diiodo-L-thyronine + AH2. It carries out the reaction 3-iodo-L-thyronine + iodide + A + H(+) = 3,5-diiodo-L-thyronine + AH2. The catalysed reaction is 3-iodo-L-thyronine + iodide + A + H(+) = 3,3'-diiodo-L-thyronine + AH2. It catalyses the reaction 3,3'-diiodothyronamine + iodide + A + H(+) = 3,3',5'-triiodothyronamine + AH2. The enzyme catalyses 3'-iodothyronamine + iodide + A + H(+) = 3',5'-diiodothyronamine + AH2. It carries out the reaction 3-iodothyronamine + iodide + A + H(+) = 3,3'-diiodothyronamine + AH2. The catalysed reaction is 3,3'-diiodothyronamine + iodide + A + H(+) = 3,3',5-triiodothyronamine + AH2. It catalyses the reaction 3-iodothyronamine + iodide + A + H(+) = 3,5-diiodothyronamine + AH2. The enzyme catalyses 3,3'-diiodo-L-thyronine sulfate + iodide + A + H(+) = 3,3',5'-triiodo-L-thyronine sulfate + AH2. It carries out the reaction 3,3',5'-triiodo-L-thyronine sulfate + iodide + A + H(+) = L-thyroxine sulfate + AH2. The catalysed reaction is 3,3'-diiodo-L-thyronine sulfate + iodide + A + H(+) = 3,3',5-triiodo-L-thyronine sulfate + AH2. In terms of biological role, plays a crucial role in the metabolism of thyroid hormones (TH) and has specific roles in TH activation and inactivation by deiodination. Catalyzes the deiodination of L-thyroxine (T4) to 3,5,3'-triiodothyronine (T3) and 3',5'-diiodothyronine (3',5'-T2) to 3'-monoiodothyronine (3'-T1) via outer-ring deiodination (ORD). Catalyzes the deiodination of T4 to 3,3',5'-triiodothyronine (rT3), T3 to 3,3'-diiodothyronine (3,3'-T2), 3,5-diiodothyronine (3,5-T2) to 3-monoiodothyronine (3-T1) and 3,3'-T2 to 3-T1 via inner-ring deiodination (IRD). Catalyzes the deiodination of rT3 to 3,3'-T2 via ORD. Catalyzes the phenolic ring deiodinations of 3,3',5'-triiodothyronamine, 3',5'-diiodothyronamine and 3,3'-diiodothyronamine as well as tyrosyl ring deiodinations of 3,5,3'-triiodothyronamine and 3,5-diiodothyronamine. Catalyzes the deiodination of L-thyroxine sulfate and 3,3',5-triiodo-L-thyronine sulfate via IRD and of 3,3',5'-triiodo-L-thyronine sulfate via ORD. The chain is Type I iodothyronine deiodinase (DIO1) from Suncus murinus (Asian house shrew).